We begin with the raw amino-acid sequence, 313 residues long: MTSKLDQLKKFTTVVADTGDFGAIKSLEPEDATTNPSLLLKAASDANNAKMLGEAFDGSKGDIGLACDRFAVAIGQEILKVVPGRVSTEVDARLSFDTNALIERSERLIGLYDAAGIKRDRVLIKLAATWEGIRAAEKLEKDGIQTNLTLLFSFAQAVACAEAGVFLISPFVGRIYDWYKKSTGTDYTGAEDPGVQSVTRIYNYYKANDFKTVVMGASFRNLNQIEQLAGCDRLTISTDLLKKLAEDTGTLERKLTPDKAGEKRSDTVKNLTESQFRWASNEDAMATEKLAEGIRQFARDQEKLEALLSAKKA.

Lysine 125 functions as the Schiff-base intermediate with substrate in the catalytic mechanism.

Belongs to the transaldolase family. Type 1 subfamily. As to quaternary structure, homodimer.

Its subcellular location is the cytoplasm. The catalysed reaction is D-sedoheptulose 7-phosphate + D-glyceraldehyde 3-phosphate = D-erythrose 4-phosphate + beta-D-fructose 6-phosphate. It functions in the pathway carbohydrate degradation; pentose phosphate pathway; D-glyceraldehyde 3-phosphate and beta-D-fructose 6-phosphate from D-ribose 5-phosphate and D-xylulose 5-phosphate (non-oxidative stage): step 2/3. Transaldolase is important for the balance of metabolites in the pentose-phosphate pathway. The chain is Transaldolase from Pseudomonas syringae pv. syringae (strain B728a).